Consider the following 482-residue polypeptide: QWRF motif-containing protein 3 (482 aa).

Basic and acidic residues predominate over residues 1 to 20; it reads MKSCEHELLKTRRGKSREVS. Disordered stretches follow at residues 1–60 and 171–220; these read MKSC…GLKK and TAKP…QWAL. Over residues 21–42 the composition is skewed to low complexity; it reads SRFLSSPSASSSPNRRNSTSNS. The span at 191–219 shows a compositional bias: polar residues; that stretch reads RTNSSKGIENRLQRNNSVSRYGSSMSQWA. Positions 292-295 match the QWRF motif motif; the sequence is QWRF.

It belongs to the QWRF family.

This chain is QWRF motif-containing protein 3 (QWRF3), found in Arabidopsis thaliana (Mouse-ear cress).